We begin with the raw amino-acid sequence, 237 residues long: UPF0173 metal-dependent hydrolase BOV_A0561 (237 aa).

This sequence belongs to the UPF0173 family.

The chain is UPF0173 metal-dependent hydrolase BOV_A0561 from Brucella ovis (strain ATCC 25840 / 63/290 / NCTC 10512).